The sequence spans 86 residues: Weak neurotoxin 8 (86 aa).

The signal sequence occupies residues 1–21 (MKTLLLTLVVVTIVCLDLGYT). Intrachain disulfides connect C24/C45, C27/C32, C38/C63, C67/C78, and C79/C84.

It belongs to the three-finger toxin family. Ancestral subfamily. Orphan group II sub-subfamily. Expressed by the venom gland.

Its subcellular location is the secreted. Its function is as follows. Binds with low affinity to muscular (alpha-1-beta-1-delta-epsilon/CHRNA1-CHRNB1-CHRND-CHRNE) and very low affinity to neuronal (alpha-7/CHRNA7) nicotinic acetylcholine receptor (nAChR). In Naja sputatrix (Malayan spitting cobra), this protein is Weak neurotoxin 8.